The sequence spans 474 residues: tRNA-2-methylthio-N(6)-dimethylallyladenosine synthase (474 aa).

The MTTase N-terminal domain occupies 3–120 (KKLHIKTWGC…LPEMINSVRG (118 aa)). [4Fe-4S] cluster contacts are provided by Cys12, Cys49, Cys83, Cys157, Cys161, and Cys164. A Radical SAM core domain is found at 143–375 (RAEGPTAFVS…QERINQQAMA (233 aa)). The TRAM domain occupies 378 to 441 (RRMLGTTQRI…PNSLRGKVVR (64 aa)).

This sequence belongs to the methylthiotransferase family. MiaB subfamily. Monomer. The cofactor is [4Fe-4S] cluster.

It is found in the cytoplasm. It carries out the reaction N(6)-dimethylallyladenosine(37) in tRNA + (sulfur carrier)-SH + AH2 + 2 S-adenosyl-L-methionine = 2-methylsulfanyl-N(6)-dimethylallyladenosine(37) in tRNA + (sulfur carrier)-H + 5'-deoxyadenosine + L-methionine + A + S-adenosyl-L-homocysteine + 2 H(+). In terms of biological role, catalyzes the methylthiolation of N6-(dimethylallyl)adenosine (i(6)A), leading to the formation of 2-methylthio-N6-(dimethylallyl)adenosine (ms(2)i(6)A) at position 37 in tRNAs that read codons beginning with uridine. This chain is tRNA-2-methylthio-N(6)-dimethylallyladenosine synthase, found in Escherichia coli (strain SMS-3-5 / SECEC).